The chain runs to 188 residues: NANOG neighbor homeobox (188 aa).

The segment at 28-106 (ETILANKKQS…NEKQKQYPEK (79 aa)) is disordered. Residues 57-106 (QNGKQKWREEGEAGRKREREKEEKNEKELQDEQENKRKRENEKQKQYPEK) show a composition bias toward basic and acidic residues. Positions 102–161 (QYPEKRLVSKSLMHTLWAKFKLNRCPTIQESLSLSFEFDMTHKQISQWFCKTRKKYNKEM) form a DNA-binding region, homeobox.

It localises to the nucleus. The protein is NANOG neighbor homeobox (NANOGNB) of Homo sapiens (Human).